An 834-amino-acid polypeptide reads, in one-letter code: Protein translocase subunit SecA (834 aa).

ATP contacts are provided by residues Gln-85, 103–107 (GEGKT), and Asp-491. The disordered stretch occupies residues 790 to 809 (RETSTNINDGEGGSHEPIKR). Cys-820, Cys-822, Cys-831, and Cys-832 together coordinate Zn(2+).

It belongs to the SecA family. In terms of assembly, monomer and homodimer. Part of the essential Sec protein translocation apparatus which comprises SecA, SecYEG and auxiliary proteins SecDF. Other proteins may also be involved. Zn(2+) is required as a cofactor.

It is found in the cell membrane. Its subcellular location is the cytoplasm. It carries out the reaction ATP + H2O + cellular proteinSide 1 = ADP + phosphate + cellular proteinSide 2.. In terms of biological role, part of the Sec protein translocase complex. Interacts with the SecYEG preprotein conducting channel. Has a central role in coupling the hydrolysis of ATP to the transfer of proteins into and across the cell membrane, serving as an ATP-driven molecular motor driving the stepwise translocation of polypeptide chains across the membrane. This Clostridium novyi (strain NT) protein is Protein translocase subunit SecA.